We begin with the raw amino-acid sequence, 231 residues long: Endo-1,4-beta-xylanase A (231 aa).

An N-terminal signal peptide occupies residues 1 to 19; it reads MVSFKSLLVAVSALTGALA. An N-linked (GlcNAc...) asparagine glycan is attached at Asn32. One can recognise a GH11 domain in the interval 41–229; that stretch reads QVTGNSEGYH…SSGSSSIYVQ (189 aa). The active-site Nucleophile is the Glu125. Glu216 serves as the catalytic Proton donor.

It belongs to the glycosyl hydrolase 11 (cellulase G) family.

Its subcellular location is the secreted. The enzyme catalyses Endohydrolysis of (1-&gt;4)-beta-D-xylosidic linkages in xylans.. It participates in glycan degradation; xylan degradation. Inhibited by the proteinaceous endoxylanase inhibitor I from T.aestivum (TAXI-I). In terms of biological role, endo-1,4-beta-xylanase involved in the hydrolysis of xylan, a major structural heterogeneous polysaccharide found in plant biomass representing the second most abundant polysaccharide in the biosphere, after cellulose. Plays an important role in causing fusarium head blight (FHB) on cereal crops. The polypeptide is Endo-1,4-beta-xylanase A (XYLA) (Gibberella zeae (strain ATCC MYA-4620 / CBS 123657 / FGSC 9075 / NRRL 31084 / PH-1) (Wheat head blight fungus)).